We begin with the raw amino-acid sequence, 335 residues long: Nucleoid-associated protein YejK (335 aa).

It belongs to the YejK family.

The protein resides in the cytoplasm. It is found in the nucleoid. The sequence is that of Nucleoid-associated protein YejK from Shigella boydii serotype 18 (strain CDC 3083-94 / BS512).